Consider the following 420-residue polypeptide: Histidine--tRNA ligase (420 aa).

It belongs to the class-II aminoacyl-tRNA synthetase family. As to quaternary structure, homodimer.

The protein resides in the cytoplasm. It catalyses the reaction tRNA(His) + L-histidine + ATP = L-histidyl-tRNA(His) + AMP + diphosphate + H(+). The protein is Histidine--tRNA ligase of Ureaplasma parvum serovar 3 (strain ATCC 27815 / 27 / NCTC 11736).